The primary structure comprises 427 residues: MNAVIDIAPAPMQQGCGDAPVLHERGQREVFCGLAGIVWLHRKIQDAFFLVVGSRTCAHLLQSAAGVMIFAEPRFATAIIDDRDLAGLADANAELDRVVTRLLERRPDIKMLFLVGSCPSEVIKLDLSRAAERLSRNFSPRVRILSYTGSGIDTTFTQGEDTCLAALVPELPASEQRALMVVGSIADIVEDQFRRVFDGLGIGPVHFFPARHAGDMPPVGPGTRFVLAQPFLADTARALEARGARRLAAPFPFGAEGTTLWLQAIAREFNVEATKFVSVVGPRRERAARALARHRTQLEGRKVFFFPDSQLEVPLARFLAREMGMVPVEVGTPYLHRQLVASELALLPAGTPLSEGQDLERQLDRCRAARPDIVVCGLGLANPLEAEGLTTKWSIELVFTPVHGFDQAADLAELFTRPLERRTRLVA.

C32, C57, and C118 together coordinate [4Fe-4S] cluster.

This sequence belongs to the BchN/ChlN family. In terms of assembly, protochlorophyllide reductase is composed of three subunits; BchL, BchN and BchB. Forms a heterotetramer of two BchB and two BchN subunits. [4Fe-4S] cluster serves as cofactor.

The enzyme catalyses chlorophyllide a + oxidized 2[4Fe-4S]-[ferredoxin] + 2 ADP + 2 phosphate = protochlorophyllide a + reduced 2[4Fe-4S]-[ferredoxin] + 2 ATP + 2 H2O. It functions in the pathway porphyrin-containing compound metabolism; bacteriochlorophyll biosynthesis (light-independent). Functionally, component of the dark-operative protochlorophyllide reductase (DPOR) that uses Mg-ATP and reduced ferredoxin to reduce ring D of protochlorophyllide (Pchlide) to form chlorophyllide a (Chlide). This reaction is light-independent. The NB-protein (BchN-BchB) is the catalytic component of the complex. In Rubrivivax gelatinosus (strain NBRC 100245 / IL144), this protein is Light-independent protochlorophyllide reductase subunit N.